A 369-amino-acid polypeptide reads, in one-letter code: Isopentenyl-diphosphate delta-isomerase (369 aa).

9–10 (RK) contributes to the substrate binding site. FMN contacts are provided by residues T65, 66 to 68 (GMT), S96, and N125. Residue 96 to 98 (SQR) participates in substrate binding. Residue Q160 coordinates substrate. Residue E161 participates in Mg(2+) binding. FMN is bound by residues K193, S218, T223, 275–277 (GVR), and 296–297 (AL).

This sequence belongs to the IPP isomerase type 2 family. As to quaternary structure, homooctamer. Dimer of tetramers. FMN is required as a cofactor. It depends on NADPH as a cofactor. Mg(2+) serves as cofactor.

The protein resides in the cytoplasm. It catalyses the reaction isopentenyl diphosphate = dimethylallyl diphosphate. Involved in the biosynthesis of isoprenoids. Catalyzes the 1,3-allylic rearrangement of the homoallylic substrate isopentenyl (IPP) to its allylic isomer, dimethylallyl diphosphate (DMAPP). The chain is Isopentenyl-diphosphate delta-isomerase from Sulfurisphaera tokodaii (strain DSM 16993 / JCM 10545 / NBRC 100140 / 7) (Sulfolobus tokodaii).